Reading from the N-terminus, the 235-residue chain is Large ribosomal subunit protein uL2 (235 aa).

The segment at 197–218 (VAMNPVDHPHGGGEGKTSGGRH) is disordered.

Belongs to the universal ribosomal protein uL2 family. As to quaternary structure, part of the 50S ribosomal subunit. Forms a bridge to the 30S subunit in the 70S ribosome.

One of the primary rRNA binding proteins. Required for association of the 30S and 50S subunits to form the 70S ribosome, for tRNA binding and peptide bond formation. It has been suggested to have peptidyltransferase activity; this is somewhat controversial. Makes several contacts with the 16S rRNA in the 70S ribosome. This Carsonella ruddii (strain PV) protein is Large ribosomal subunit protein uL2 (rplB).